The primary structure comprises 427 residues: Glutamyl-tRNA(Gln) amidotransferase subunit D (427 aa).

Over residues 1–18 the composition is skewed to basic and acidic residues; the sequence is MTADPGDRVRVTHGDASH. The tract at residues 1–20 is disordered; that stretch reads MTADPGDRVRVTHGDASHEG. Residues 80-413 enclose the Asparaginase/glutaminase domain; it reads PTIALISTGG…DDPEAAMQES (334 aa). Residues Thr-90, Thr-166, Asp-167, and Lys-243 contribute to the active site.

This sequence belongs to the asparaginase 1 family. GatD subfamily. As to quaternary structure, heterodimer of GatD and GatE.

It catalyses the reaction L-glutamyl-tRNA(Gln) + L-glutamine + ATP + H2O = L-glutaminyl-tRNA(Gln) + L-glutamate + ADP + phosphate + H(+). Functionally, allows the formation of correctly charged Gln-tRNA(Gln) through the transamidation of misacylated Glu-tRNA(Gln) in organisms which lack glutaminyl-tRNA synthetase. The reaction takes place in the presence of glutamine and ATP through an activated gamma-phospho-Glu-tRNA(Gln). The GatDE system is specific for glutamate and does not act on aspartate. In Halobacterium salinarum (strain ATCC 29341 / DSM 671 / R1), this protein is Glutamyl-tRNA(Gln) amidotransferase subunit D.